The chain runs to 81 residues: Small ribosomal subunit protein uS15 (81 aa).

The protein belongs to the universal ribosomal protein uS15 family. As to quaternary structure, part of the 30S ribosomal subunit. Forms a bridge to the 50S subunit in the 70S ribosome, contacting the 23S rRNA.

Functionally, one of the primary rRNA binding proteins, it binds directly to 16S rRNA where it helps nucleate assembly of the platform of the 30S subunit by binding and bridging several RNA helices of the 16S rRNA. Forms an intersubunit bridge (bridge B4) with the 23S rRNA of the 50S subunit in the ribosome. The polypeptide is Small ribosomal subunit protein uS15 (Mesomycoplasma hyorhinis (Mycoplasma hyorhinis)).